We begin with the raw amino-acid sequence, 406 residues long: Tubby-like F-box protein 11 (406 aa).

Residues 53 to 108 form the F-box domain; it reads SCWTQLPPELLREVLARVEESEGWWPRRRDVVACAGVCRSWRGIVREIVRTPEASG.

It belongs to the TUB family. As to expression, ubiquitous.

The polypeptide is Tubby-like F-box protein 11 (TULP11) (Oryza sativa subsp. japonica (Rice)).